The sequence spans 259 residues: MSSPNWLKDLTGAWLFYTVFPKLTRINPRFERIARFSPLIGVLIGVLQVSVLILLLQLQWPNESMPFIAIALGLWITGGIHVDGLMDTADGIAAGPSRCIEAMKDSRIGASGIIALTINLLLQIAALFKLRLLILFAIPIASFWGRYSQIWAISHYPYLNKEGSSKFLHKKNWRGFLIESIPSYAFLSFLIFILINIDISIISTPNLIIGIIVGFLPALIIPHLLARRLGGHSGDSYGASVVLVETCMLIIFSIILPAS.

7 consecutive transmembrane segments (helical) span residues 36-56, 65-85, 108-128, 133-153, 175-195, 201-221, and 238-258; these read FSPL…ILLL, MPFI…VDGL, IGAS…AALF, LILF…IWAI, GFLI…FILI, IIST…ALII, and GASV…ILPA.

This sequence belongs to the CobS family. It depends on Mg(2+) as a cofactor.

It localises to the cell inner membrane. The enzyme catalyses alpha-ribazole + adenosylcob(III)inamide-GDP = adenosylcob(III)alamin + GMP + H(+). The catalysed reaction is alpha-ribazole 5'-phosphate + adenosylcob(III)inamide-GDP = adenosylcob(III)alamin 5'-phosphate + GMP + H(+). The protein operates within cofactor biosynthesis; adenosylcobalamin biosynthesis; adenosylcobalamin from cob(II)yrinate a,c-diamide: step 7/7. Joins adenosylcobinamide-GDP and alpha-ribazole to generate adenosylcobalamin (Ado-cobalamin). Also synthesizes adenosylcobalamin 5'-phosphate from adenosylcobinamide-GDP and alpha-ribazole 5'-phosphate. The chain is Adenosylcobinamide-GDP ribazoletransferase from Prochlorococcus marinus (strain SARG / CCMP1375 / SS120).